Reading from the N-terminus, the 594-residue chain is (-)-endo-fenchol synthase, chloroplastic (594 aa).

The N-terminal 50 residues, methionine 1–valine 50, are a transit peptide targeting the chloroplast. Mg(2+) contacts are provided by aspartate 348, aspartate 352, aspartate 492, and glutamate 500. The DDXXD motif motif lies at aspartate 348 to aspartate 352.

This sequence belongs to the terpene synthase family. Tpsa subfamily. Mg(2+) serves as cofactor. Requires Mn(2+) as cofactor. Expressed at high levels in leaves.

The protein localises to the plastid. It is found in the chloroplast. The enzyme catalyses (2E)-geranyl diphosphate = alpha-pinene + diphosphate. It catalyses the reaction (2E)-geranyl diphosphate + H2O = (1S,2S,4R)-endo-fenchol + diphosphate. It carries out the reaction (2E)-geranyl diphosphate = limonene + diphosphate. It participates in secondary metabolite biosynthesis; terpenoid biosynthesis. In terms of biological role, monoterpene synthase involved in the biosynthesis of volatile compounds widely used in aromatherapy and folk medicine, and present in culinary herbs. Mediates the conversion of (2E)-geranyl diphosphate (GPP) into alpha fenchol, limonene and alpha-pinene and, as minor compounds, into beta-myrcene, alpha-terpinolene and alpha-phellandrene. This chain is (-)-endo-fenchol synthase, chloroplastic, found in Lavandula pedunculata subsp. lusitanica (French lavender).